We begin with the raw amino-acid sequence, 216 residues long: MVEITAAELEAAEKIFGERLDLAKRYVEHLATSGTERGLIGPREIPRLWSRHVLNCAVIESAIAMDSHVADVGSGAGLPGLCLAIARPDLELTLIEPLERRVIWLQEVVDDLGLDNVTIMRTRAELAVGMVDADVVTARAVSALSNLAGLTIPLLNGHGEVVAIKGRSAAEEIEKAKKVIRKLGGVETSVVVCGQELLEEPTTVVRIIVNKPGKTA.

S-adenosyl-L-methionine contacts are provided by residues G73, L78, 124–125, and R139; that span reads AE.

Belongs to the methyltransferase superfamily. RNA methyltransferase RsmG family.

It is found in the cytoplasm. Specifically methylates the N7 position of guanine in position 518 of 16S rRNA. This is Ribosomal RNA small subunit methyltransferase G from Paenarthrobacter aurescens (strain TC1).